The primary structure comprises 1144 residues: Probable translation initiation factor IF-2 (1144 aa).

The DOD-type homing endonuclease domain maps to F232–I362. Residues T551–L768 enclose the tr-type G domain. Residues D624 to H628 and N678 to D681 each bind GTP.

Belongs to the TRAFAC class translation factor GTPase superfamily. Classic translation factor GTPase family. IF-2 subfamily. This protein undergoes a protein self splicing that involves a post-translational excision of the intervening region (intein) followed by peptide ligation.

Function in general translation initiation by promoting the binding of the formylmethionine-tRNA to ribosomes. Seems to function along with eIF-2. This is Probable translation initiation factor IF-2 (infB) from Thermococcus kodakarensis (strain ATCC BAA-918 / JCM 12380 / KOD1) (Pyrococcus kodakaraensis (strain KOD1)).